The sequence spans 117 residues: Protein MGF 110-13L (117 aa).

A signal peptide spans 1–16 (MKLFVLLSILVWLAQP).

The protein belongs to the asfivirus MGF 110 family.

This Ornithodoros (relapsing fever ticks) protein is Protein MGF 110-13L.